Reading from the N-terminus, the 373-residue chain is Chaperone protein DnaJ (373 aa).

One can recognise a J domain in the interval 4-68; the sequence is DYYEILGLTK…VKREQYNQFG (65 aa). The CR-type zinc-finger motif lies at 142–224; it reads GKEIVEPLEK…CKGKTHTKTT (83 aa). Residues Cys155, Cys158, Cys172, Cys175, Cys198, Cys201, Cys212, and Cys215 each contribute to the Zn(2+) site. CXXCXGXG motif repeat units follow at residues 155–162, 172–179, 198–205, and 212–219; these read CNTCNGSG, CTQCSGMG, CSKCNGIG, and CLICKGKT.

Belongs to the DnaJ family. In terms of assembly, homodimer. Zn(2+) serves as cofactor.

It is found in the cytoplasm. Functionally, participates actively in the response to hyperosmotic and heat shock by preventing the aggregation of stress-denatured proteins and by disaggregating proteins, also in an autonomous, DnaK-independent fashion. Unfolded proteins bind initially to DnaJ; upon interaction with the DnaJ-bound protein, DnaK hydrolyzes its bound ATP, resulting in the formation of a stable complex. GrpE releases ADP from DnaK; ATP binding to DnaK triggers the release of the substrate protein, thus completing the reaction cycle. Several rounds of ATP-dependent interactions between DnaJ, DnaK and GrpE are required for fully efficient folding. Also involved, together with DnaK and GrpE, in the DNA replication of plasmids through activation of initiation proteins. This chain is Chaperone protein DnaJ, found in Mycoplasma mobile (strain ATCC 43663 / 163K / NCTC 11711) (Mesomycoplasma mobile).